Consider the following 290-residue polypeptide: Prepilin leader peptidase/N-methyltransferase (290 aa).

The helical transmembrane segment at 14-34 (LYFSLVFLFSLMIGSFLNVVI) threads the bilayer. 4 residues coordinate Zn(2+): Cys74, Cys77, Cys99, and Cys102. A run of 6 helical transmembrane segments spans residues 106 to 126 (ISARYPLVELLTALLSVAVAM), 130 to 150 (PGWGTLAALLLTWVLVALTFI), 161 to 181 (LTLPLLWGGLLFNLLGGFVSL), 185 to 205 (VIGAMAGYLVLWSLYWAFKLL), 232 to 252 (PIVLLLSSLVGAFMGIGLILL), and 261 to 281 (IPFGPYLAIAGWIALLWGDSI).

It belongs to the peptidase A24 family. It depends on Zn(2+) as a cofactor.

It is found in the cell inner membrane. It carries out the reaction Typically cleaves a -Gly-|-Phe- bond to release an N-terminal, basic peptide of 5-8 residues from type IV prepilin, and then N-methylates the new N-terminal amino group, the methyl donor being S-adenosyl-L-methionine.. Functionally, plays an essential role in type IV pili and type II pseudopili formation by proteolytically removing the leader sequence from substrate proteins and subsequently monomethylating the alpha-amino group of the newly exposed N-terminal phenylalanine. In Aeromonas hydrophila, this protein is Prepilin leader peptidase/N-methyltransferase (tapD).